We begin with the raw amino-acid sequence, 507 residues long: Maturase K (507 aa).

Belongs to the intron maturase 2 family. MatK subfamily.

It is found in the plastid. The protein localises to the chloroplast. Functionally, usually encoded in the trnK tRNA gene intron. Probably assists in splicing its own and other chloroplast group II introns. The protein is Maturase K of Ranunculus macranthus (Large buttercup).